We begin with the raw amino-acid sequence, 512 residues long: Citrate synthase (512 aa).

Residues His-288, His-327, and Asp-383 contribute to the active site. Residues 483-512 (AIPKTATGSKSQLSASIEQSFGEKISPQSH) form a disordered region. Polar residues predominate over residues 488–501 (ATGSKSQLSASIEQ).

It belongs to the citrate synthase family.

The protein localises to the cytoplasm. The catalysed reaction is oxaloacetate + acetyl-CoA + H2O = citrate + CoA + H(+). The protein operates within carbohydrate metabolism; tricarboxylic acid cycle; isocitrate from oxaloacetate: step 1/2. This Dictyostelium discoideum (Social amoeba) protein is Citrate synthase (gltA).